The chain runs to 326 residues: Triacylglycerol lipase 2 (326 aa).

The (A/G)XSXG lipase motif signature appears at 142–146; sequence AHSMG.

Interacts with MIA40; forms mixed disulfide intermediates with MIA40.

The protein resides in the mitochondrion. Its subcellular location is the mitochondrion intermembrane space. It carries out the reaction a triacylglycerol + H2O = a diacylglycerol + a fatty acid + H(+). The enzyme catalyses 1,2,3-tri-(9Z-octadecenoyl)-glycerol + H2O = di-(9Z)-octadecenoylglycerol + (9Z)-octadecenoate + H(+). The catalysed reaction is 1,2,3-tributanoylglycerol + H2O = dibutanoylglycerol + butanoate + H(+). It catalyses the reaction 1,2,3-trioctanoylglycerol + H2O = dioctanoylglycerol + octanoate + H(+). It carries out the reaction di-(9Z)-octadecenoylglycerol + H2O = (9Z-octadecenoyl)-glycerol + (9Z)-octadecenoate + H(+). The enzyme catalyses dioctanoylglycerol + H2O = octanoylglycerol + octanoate + H(+). In terms of biological role, mitochondrial triacylglycerol (TAG) lipase with activity toward long-chain diacylglycerols (DAGs) and triacylglycerols (TAGs). Involved in mitochondrial lipid metabolism. In Saccharomyces cerevisiae (strain ATCC 204508 / S288c) (Baker's yeast), this protein is Triacylglycerol lipase 2 (TGL2).